We begin with the raw amino-acid sequence, 372 residues long: Alanine racemase (372 aa).

Lys48 functions as the Proton acceptor; specific for D-alanine in the catalytic mechanism. Residue Lys48 is modified to N6-(pyridoxal phosphate)lysine. Arg143 contacts substrate. The active-site Proton acceptor; specific for L-alanine is the Tyr268. Met316 serves as a coordination point for substrate.

This sequence belongs to the alanine racemase family. The cofactor is pyridoxal 5'-phosphate.

It carries out the reaction L-alanine = D-alanine. It functions in the pathway amino-acid biosynthesis; D-alanine biosynthesis; D-alanine from L-alanine: step 1/1. In terms of biological role, catalyzes the interconversion of L-alanine and D-alanine. May also act on other amino acids. This chain is Alanine racemase (alr), found in Vibrio vulnificus (strain YJ016).